The following is a 307-amino-acid chain: F-box protein At5g03100 (307 aa).

Positions 8-54 (VDFISSLPDEILHHILANTPTKLAIRTSVLSKRWKHVWYETPSISIV) constitute an F-box domain.

The protein is F-box protein At5g03100 of Arabidopsis thaliana (Mouse-ear cress).